Here is a 282-residue protein sequence, read N- to C-terminus: Putative glycosyltransferase HI_0765 (282 aa).

This sequence belongs to the glycosyltransferase 25 family.

This Haemophilus influenzae (strain ATCC 51907 / DSM 11121 / KW20 / Rd) protein is Putative glycosyltransferase HI_0765.